We begin with the raw amino-acid sequence, 335 residues long: Glyceraldehyde-3-phosphate dehydrogenase 1 (335 aa).

NAD(+)-binding positions include 12–13, aspartate 34, arginine 78, and serine 120; that span reads RI. Residues 151–153 and threonine 182 contribute to the D-glyceraldehyde 3-phosphate site; that span reads SCT. The active-site Nucleophile is the cysteine 152. An NAD(+)-binding site is contributed by asparagine 183. D-glyceraldehyde 3-phosphate is bound by residues arginine 197, 210 to 211, and arginine 233; that span reads TG. Asparagine 315 contributes to the NAD(+) binding site.

Belongs to the glyceraldehyde-3-phosphate dehydrogenase family. In terms of assembly, homotetramer. Interacts with BrxC. In terms of processing, in response to oxidative stress, the active site Cys likely reacts with bacillithiol (BSH) to form mixed disulfides to protect the Cys residue against overoxidation. S-bacillithiolation presumably leads to loss of catalytic activity. Debacillithiolation by monothiol bacilliredoxin BrxC restores the activity.

The protein localises to the cytoplasm. It carries out the reaction D-glyceraldehyde 3-phosphate + phosphate + NAD(+) = (2R)-3-phospho-glyceroyl phosphate + NADH + H(+). The protein operates within carbohydrate degradation; glycolysis; pyruvate from D-glyceraldehyde 3-phosphate: step 1/5. Functionally, involved in the glycolysis. Catalyzes the oxidative phosphorylation of glyceraldehyde 3-phosphate (G3P) to 1,3-bisphosphoglycerate (BPG) using the cofactor NAD. The first reaction step involves the formation of a hemiacetal intermediate between G3P and a cysteine residue, and this hemiacetal intermediate is then oxidized to a thioester, with concomitant reduction of NAD to NADH. The reduced NADH is then exchanged with the second NAD, and the thioester is attacked by a nucleophilic inorganic phosphate to produce BPG. This Bacillus subtilis (strain 168) protein is Glyceraldehyde-3-phosphate dehydrogenase 1.